Here is a 522-residue protein sequence, read N- to C-terminus: Glucans biosynthesis protein G (522 aa).

The signal sequence occupies residues 1 to 33 (MLDNKFGFKQRVASLRWLSAAIMLSVSAVPAWA).

Belongs to the OpgD/OpgG family.

It is found in the periplasm. It participates in glycan metabolism; osmoregulated periplasmic glucan (OPG) biosynthesis. Its function is as follows. Involved in the biosynthesis of osmoregulated periplasmic glucans (OPGs). This chain is Glucans biosynthesis protein G, found in Pectobacterium atrosepticum (strain SCRI 1043 / ATCC BAA-672) (Erwinia carotovora subsp. atroseptica).